The sequence spans 71 residues: Long neurotoxin 2 (71 aa).

5 disulfides stabilise this stretch: cysteine 3–cysteine 20, cysteine 14–cysteine 41, cysteine 26–cysteine 30, cysteine 45–cysteine 56, and cysteine 57–cysteine 62.

It belongs to the three-finger toxin family. Long-chain subfamily. Type II alpha-neurotoxin sub-subfamily. In terms of tissue distribution, expressed by the venom gland.

The protein resides in the secreted. In terms of biological role, binds with high affinity to muscular (alpha-1/CHRNA1) and neuronal (alpha-7/CHRNA7) nicotinic acetylcholine receptor (nAChR) and inhibits acetylcholine from binding to the receptor, thereby impairing neuromuscular and neuronal transmission. The protein is Long neurotoxin 2 of Naja naja (Indian cobra).